Here is a 100-residue protein sequence, read N- to C-terminus: Large ribosomal subunit protein uL23 (100 aa).

This sequence belongs to the universal ribosomal protein uL23 family. In terms of assembly, part of the 50S ribosomal subunit. Contacts protein L29, and trigger factor when it is bound to the ribosome.

One of the early assembly proteins it binds 23S rRNA. One of the proteins that surrounds the polypeptide exit tunnel on the outside of the ribosome. Forms the main docking site for trigger factor binding to the ribosome. This Mycobacterium sp. (strain JLS) protein is Large ribosomal subunit protein uL23.